Here is a 590-residue protein sequence, read N- to C-terminus: Arginine--tRNA ligase (590 aa).

The 'HIGH' region motif lies at 138-148; the sequence is ANPTGPLHIGH.

The protein belongs to the class-I aminoacyl-tRNA synthetase family. Monomer.

It localises to the cytoplasm. It catalyses the reaction tRNA(Arg) + L-arginine + ATP = L-arginyl-tRNA(Arg) + AMP + diphosphate. This is Arginine--tRNA ligase from Orientia tsutsugamushi (strain Boryong) (Rickettsia tsutsugamushi).